The sequence spans 416 residues: Thyroid hormone receptor alpha-A (416 aa).

Positions 1–13 (MEPMSNKQDSNSS) are enriched in polar residues. Positions 1-37 (MEPMSNKQDSNSSEGDEKGWPDVPKRKRKNSQCSMKS) are disordered. Positions 1 to 58 (MEPMSNKQDSNSSEGDEKGWPDVPKRKRKNSQCSMKSMSALSVSVPGYIPSYLEKDEP) are modulating. Basic and acidic residues predominate over residues 15-24 (GDEKGWPDVP). 2 consecutive NR C4-type zinc fingers follow at residues 59–79 (CVVC…CEGC) and 97–121 (CKYE…FKKC). The nuclear receptor DNA-binding region spans 59–126 (CVVCGDKATG…RFKKCISVGM (68 aa)). The NR LBD domain occupies 169 to 413 (AEWELIRMAT…PPLFLEVFED (245 aa)).

Belongs to the nuclear hormone receptor family. NR1 subfamily.

The protein localises to the nucleus. In terms of biological role, high affinity receptor for triiodothyronine. This Paralichthys olivaceus (Bastard halibut) protein is Thyroid hormone receptor alpha-A (thra1).